Here is a 542-residue protein sequence, read N- to C-terminus: Prolyl 3-hydroxylase OGFOD1 (542 aa).

The Fe2OG dioxygenase domain occupies 134-239; the sequence is DLESTIDMSC…RLSISGWFHG (106 aa). Positions 155 and 157 each coordinate Fe cation. A 2-oxoglutarate-binding site is contributed by Tyr-169. His-218 is a binding site for Fe cation. Arg-230 is a binding site for 2-oxoglutarate. Residues 373–435 form a disordered region; it reads EDEMNDKKEA…TKKESSVPTC (63 aa). Residues 400 to 416 show a composition bias toward polar residues; it reads ENNQTAISNNSQQSNEQ.

It belongs to the TPA1 family. Monomer. Requires Fe(2+) as cofactor. L-ascorbate serves as cofactor.

The protein localises to the cytoplasm. It is found in the nucleus. It catalyses the reaction [ribosomal protein uS12]-L-proline + 2-oxoglutarate + O2 = [ribosomal protein uS12]-(3S)-3-hydroxy-L-proline + succinate + CO2. In terms of biological role, prolyl 3-hydroxylase that catalyzes 3-hydroxylation of 'Pro-62' of small ribosomal subunit uS12 (RPS23), thereby regulating protein translation termination efficiency. Involved in stress granule formation. The polypeptide is Prolyl 3-hydroxylase OGFOD1 (OGFOD1) (Pongo abelii (Sumatran orangutan)).